The chain runs to 173 residues: NADH-ubiquinone oxidoreductase chain 6 (173 aa).

Helical transmembrane passes span 1-21 (MTYFVIFLGICFMLGVLAVAS), 27-47 (YGVVGLVVASVMGCGWLVSLG), 48-68 (VSFVSLALFLVYLGGMLVVFV), 87-107 (VVGYGLGFVLVVWMGVVLGGL), and 139-159 (CGVGLFLVAGWGLLLALFVVL).

The protein belongs to the complex I subunit 6 family. As to quaternary structure, core subunit of respiratory chain NADH dehydrogenase (Complex I) which is composed of 45 different subunits.

It localises to the mitochondrion inner membrane. It carries out the reaction a ubiquinone + NADH + 5 H(+)(in) = a ubiquinol + NAD(+) + 4 H(+)(out). Functionally, core subunit of the mitochondrial membrane respiratory chain NADH dehydrogenase (Complex I) which catalyzes electron transfer from NADH through the respiratory chain, using ubiquinone as an electron acceptor. Essential for the catalytic activity and assembly of complex I. In Gallus gallus (Chicken), this protein is NADH-ubiquinone oxidoreductase chain 6 (MT-ND6).